Here is a 209-residue protein sequence, read N- to C-terminus: CASP-like protein 1B1 (209 aa).

The span at 1 to 10 (MDLERGDKKP) shows a compositional bias: basic and acidic residues. Residues 1 to 39 (MDLERGDKKPPPPPPPAPRTAAATTTTTTTPACSGKKRP) are disordered. Residues 1 to 49 (MDLERGDKKPPPPPPPAPRTAAATTTTTTTPACSGKKRPPLRDSLVALQ) lie on the Cytoplasmic side of the membrane. The span at 19–32 (RTAAATTTTTTTPA) shows a compositional bias: low complexity. The helical transmembrane segment at 50–70 (PVLLRAAAALAAAAAAAVMAL) threads the bilayer. The Extracellular portion of the chain corresponds to 71-100 (DAQSYTAVVAIVGTRPLTQTFTAKFSDTPA). A helical membrane pass occupies residues 101 to 121 (FVYFVIANAIAAAYNLLVLLV). Residues 122–134 (RRRRRTTAGLVVR) lie on the Cytoplasmic side of the membrane. The chain crosses the membrane as a helical span at residues 135–155 (MLDMVVMALLATGAAAAASMA). Topologically, residues 156–180 (ELGRNGNARARWNPVCDRFGSFCRR) are extracellular. The chain crosses the membrane as a helical span at residues 181 to 201 (GGAALAASFVGVALMLALNLL). The Cytoplasmic portion of the chain corresponds to 202–209 (SAASGAGC).

Belongs to the Casparian strip membrane proteins (CASP) family. In terms of assembly, homodimer and heterodimers.

The protein localises to the cell membrane. The chain is CASP-like protein 1B1 from Zea mays (Maize).